The primary structure comprises 63 residues: Cecropin-A1 (63 aa).

An N-terminal signal peptide occupies residues Met1–Ala23. At Arg62 the chain carries Arginine amide.

It belongs to the cecropin family.

It is found in the secreted. In terms of biological role, cecropins have lytic and antibacterial activity against several Gram-positive and Gram-negative bacteria. This Drosophila mauritiana (Fruit fly) protein is Cecropin-A1 (CecA1).